Reading from the N-terminus, the 270-residue chain is 25S rRNA adenine-N(1) methyltransferase (270 aa).

Residues Gly-111 and Asp-131 each contribute to the S-adenosyl-L-methionine site.

It belongs to the BMT2 family.

It is found in the nucleus. Its subcellular location is the nucleolus. In terms of biological role, S-adenosyl-L-methionine-dependent methyltransferase that specifically methylates the N(1) position of an adenine present in helix 65 in 25S rRNA. The chain is 25S rRNA adenine-N(1) methyltransferase from Schizosaccharomyces pombe (strain 972 / ATCC 24843) (Fission yeast).